A 189-amino-acid polypeptide reads, in one-letter code: Potassium-transporting ATPase KdpC subunit (189 aa).

Residues 11-31 form a helical membrane-spanning segment; the sequence is LFVLLTVITGVLYPVFVTGLA.

The protein belongs to the KdpC family. In terms of assembly, the system is composed of three essential subunits: KdpA, KdpB and KdpC.

Its subcellular location is the cell inner membrane. Functionally, part of the high-affinity ATP-driven potassium transport (or Kdp) system, which catalyzes the hydrolysis of ATP coupled with the electrogenic transport of potassium into the cytoplasm. This subunit acts as a catalytic chaperone that increases the ATP-binding affinity of the ATP-hydrolyzing subunit KdpB by the formation of a transient KdpB/KdpC/ATP ternary complex. This chain is Potassium-transporting ATPase KdpC subunit, found in Polynucleobacter asymbioticus (strain DSM 18221 / CIP 109841 / QLW-P1DMWA-1) (Polynucleobacter necessarius subsp. asymbioticus).